The sequence spans 100 residues: Urease subunit gamma (100 aa).

It belongs to the urease gamma subunit family. As to quaternary structure, heterotrimer of UreA (gamma), UreB (beta) and UreC (alpha) subunits. Three heterotrimers associate to form the active enzyme.

It localises to the cytoplasm. The catalysed reaction is urea + 2 H2O + H(+) = hydrogencarbonate + 2 NH4(+). Its pathway is nitrogen metabolism; urea degradation; CO(2) and NH(3) from urea (urease route): step 1/1. This is Urease subunit gamma from Herpetosiphon aurantiacus (strain ATCC 23779 / DSM 785 / 114-95).